Here is a 270-residue protein sequence, read N- to C-terminus: PspA protein (270 aa).

Positions 238 to 270 (MRGEALPAGGTTATPRPATETSGGAIAEQPYGQ) are disordered. A compositionally biased stretch (low complexity) spans 240 to 258 (GEALPAGGTTATPRPATET).

The protein belongs to the PspA/Vipp/IM30 family.

Its subcellular location is the cytoplasm. Its function is as follows. Involved in resistance to stress. Associates with and regulates lipid droplets (LDs) homeostasis under conditions of stress and may regulate non-replicating persistence (NRP). Could be involved in preservation of envelope integrity and tolerance to surface stress. The polypeptide is PspA protein (Mycobacterium tuberculosis (strain ATCC 25177 / H37Ra)).